Reading from the N-terminus, the 226-residue chain is Protease RseP (226 aa).

The PDZ domain occupies 1–56 (VEKVIPGSAAEKAGLQKGDRIVKVGSQEIDVWHTFTSFVSNNPNVPLELSVDRAGH). 2 consecutive transmembrane segments (helical) span residues 152–174 (LVYY…LIPL) and 202–221 (FSYR…ALFN).

It belongs to the peptidase M50B family. As to quaternary structure, interacts with RseA. Zn(2+) serves as cofactor.

Its subcellular location is the cell inner membrane. Its function is as follows. A site-2 regulated intramembrane protease (S2P) that cleaves the peptide bond between 'Ala-108' and 'Cys-109' in the transmembrane region of RseA. Part of a regulated intramembrane proteolysis (RIP) cascade. Acts on DegS-cleaved RseA to release the cytoplasmic domain of RseA. This provides the cell with sigma-E (RpoE) activity through the proteolysis of RseA. The polypeptide is Protease RseP (rseP) (Photorhabdus luminescens (Xenorhabdus luminescens)).